Consider the following 212-residue polypeptide: Large ribosomal subunit protein uL3 (212 aa).

N5-methylglutamine is present on Gln153.

The protein belongs to the universal ribosomal protein uL3 family. As to quaternary structure, part of the 50S ribosomal subunit. Forms a cluster with proteins L14 and L19. Methylated by PrmB.

One of the primary rRNA binding proteins, it binds directly near the 3'-end of the 23S rRNA, where it nucleates assembly of the 50S subunit. This chain is Large ribosomal subunit protein uL3, found in Dechloromonas aromatica (strain RCB).